Reading from the N-terminus, the 190-residue chain is uncharacterized protein (190 aa).

One can recognise an HTH tetR-type domain in the interval 1–58; that stretch reads MDKRILAETFRLIKQKGFSFTMNDLAAALGTSKRTLYAYYSSKDQLVEAVVEQFIAEM. Positions 21-40 form a DNA-binding region, H-T-H motif; it reads TMNDLAAALGTSKRTLYAYY.

This is an uncharacterized protein from Bacillus subtilis (strain 168).